We begin with the raw amino-acid sequence, 995 residues long: Probable copper-transporting ATPase HMA5 (995 aa).

Topologically, residues 1-299 (MATKLLSLTC…QGEIKQYYKS (299 aa)) are cytoplasmic. 2 consecutive HMA domains span residues 51-117 (SRAV…FEAS) and 129-195 (QVCR…FEAV). Cu(+)-binding residues include C62, C65, C140, and C143. Residues 204–270 (SKIDLKIDGE…VIESTVFGHS (67 aa)) form the HMA 3; degenerate domain. The helical transmembrane segment at 300 to 321 (FLWSLVFTVPVFLTAMVFMYIP) threads the bilayer. The Extracellular segment spans residues 322-340 (GIKDLLMFKVINMLTVGEI). A helical membrane pass occupies residues 341-360 (IRCVLATPVQFVIGWRFYTG). At 361 to 367 (SYKALRR) the chain is on the cytoplasmic side. The chain crosses the membrane as a helical span at residues 368 to 388 (GSANMDVLIALGTNAAYFYSL). The Extracellular segment spans residues 389–406 (YTVLRAATSPDFKGVDFF). A helical membrane pass occupies residues 407–427 (ETSAMLISFIILGKYLEVMAK). The Cytoplasmic portion of the chain corresponds to 428–561 (GKTSQAIAKL…KAPVQKLADR (134 aa)). A helical transmembrane segment spans residues 562–584 (ISKFFVPLVIFLSFSTWLAWFLA). Residues 585–605 (GKLHWYPESWIPSSMDSFELA) lie on the Extracellular side of the membrane. A helical membrane pass occupies residues 606-623 (LQFGISVMVIACPCALGL). The Cytoplasmic segment spans residues 624 to 920 (ATPTAVMVGT…DLSRKTFSRI (297 aa)). D661 (4-aspartylphosphate intermediate) is an active-site residue. The Mg(2+) site is built by D866 and D870. Residues 921-940 (RLNYVWALGYNLMGIPIAAG) traverse the membrane as a helical segment. At 941–952 (VLFPGTRFRLPP) the chain is on the extracellular side. Residues 953-971 (WIAGAAMAASSVSVVCCSL) form a helical membrane-spanning segment. Residues 972–995 (LLKNYKRPKKLDHLEIREIQVERV) lie on the Cytoplasmic side of the membrane.

Belongs to the cation transport ATPase (P-type) (TC 3.A.3) family. Type IB subfamily. In terms of assembly, interacts with ATX1. Expressed in roots and flowers.

It is found in the membrane. The catalysed reaction is Cu(+)(in) + ATP + H2O = Cu(+)(out) + ADP + phosphate + H(+). Functionally, involved in copper import into the cell. May play a role in copper detoxification in roots. This is Probable copper-transporting ATPase HMA5 (HMA5) from Arabidopsis thaliana (Mouse-ear cress).